The primary structure comprises 1183 residues: Peroxisomal ATPase PEX6 (1183 aa).

Residues 161–205 (ESRGKKTGEPEDGPLANGIDLNGVDDSDSDEDVLSQGDDDDENNV) are disordered. A compositionally biased stretch (acidic residues) spans 183 to 204 (GVDDSDSDEDVLSQGDDDDENN). Positions 576–785 (LPNNYISPVH…VERAMTACSE (210 aa)) are AAA-cassette D1. The segment at 878-1070 (GILFYGPPGT…CSDAMLKAIT (193 aa)) is AAA-cassette D2. An ATP-binding site is contributed by 883–890 (GPPGTGKT). Residues 1160 to 1183 (IMVDGPGTGGEGAFGDDGDEEGLY) form a disordered region. Acidic residues predominate over residues 1173–1183 (FGDDGDEEGLY).

The protein belongs to the AAA ATPase family. In terms of assembly, interacts with PEX1; forming the PEX1-PEX6 AAA ATPase complex, which is composed of a heterohexamer formed by a trimer of PEX1-PEX6 dimers.

The protein resides in the cytoplasm. The protein localises to the cytosol. It localises to the peroxisome membrane. It catalyses the reaction ATP + H2O = ADP + phosphate + H(+). Its function is as follows. Component of the PEX1-PEX6 AAA ATPase complex, a protein dislocase complex that mediates the ATP-dependent extraction of the PEX5 receptor from peroxisomal membranes, an essential step for PEX5 recycling. Specifically recognizes PEX5 monoubiquitinated at 'Cys-6', and pulls it out of the peroxisome lumen through the PEX2-PEX10-PEX12 retrotranslocation channel. Extraction by the PEX1-PEX6 AAA ATPase complex is accompanied by unfolding of the TPR repeats and release of bound cargo from PEX5. Regulates autophagy and biogenesis of peroxisomes and Woronin bodies. Plays important roles in mycelial growth and development and stress response. Is also essential for conidiation and fatty acid utilization. Required for nematode predation via trap formation. The sequence is that of Peroxisomal ATPase PEX6 from Arthrobotrys oligospora (strain ATCC 24927 / CBS 115.81 / DSM 1491) (Nematode-trapping fungus).